Here is a 457-residue protein sequence, read N- to C-terminus: uncharacterized protein (457 aa).

The residue at position 75 (lysine 75) is an N6-(pyridoxal phosphate)lysine.

It depends on pyridoxal 5'-phosphate as a cofactor.

This is an uncharacterized protein from Sinorhizobium fredii (strain NBRC 101917 / NGR234).